The primary structure comprises 495 residues: Formin-like protein 17 (495 aa).

Positions 1–92 (MDIRELIDIT…HNLKGQGQTR (92 aa)) are disordered. A compositionally biased stretch (pro residues) spans 19-29 (GPPPPPPPPLL). Low complexity predominate over residues 30–39 (QPHHSALSSS). The FH2 domain maps to 86–486 (KGQGQTRKAN…RAQKEAENEK (401 aa)).

Belongs to the formin-like family. Class-II subfamily.

This chain is Formin-like protein 17 (FH17), found in Arabidopsis thaliana (Mouse-ear cress).